A 444-amino-acid polypeptide reads, in one-letter code: Tubulin beta-6 chain (444 aa).

Gln11, Glu69, Ser138, Gly142, Thr143, Gly144, Asn204, and Asn226 together coordinate GTP. Residue Glu69 participates in Mg(2+) binding.

It belongs to the tubulin family. Dimer of alpha and beta chains. A typical microtubule is a hollow water-filled tube with an outer diameter of 25 nm and an inner diameter of 15 nM. Alpha-beta heterodimers associate head-to-tail to form protofilaments running lengthwise along the microtubule wall with the beta-tubulin subunit facing the microtubule plus end conferring a structural polarity. Microtubules usually have 13 protofilaments but different protofilament numbers can be found in some organisms and specialized cells. Mg(2+) is required as a cofactor. Expressed in roots, leaf sheaths, anthers, and suspension cultured cells.

It is found in the cytoplasm. The protein localises to the cytoskeleton. Functionally, tubulin is the major constituent of microtubules, a cylinder consisting of laterally associated linear protofilaments composed of alpha- and beta-tubulin heterodimers. Microtubules grow by the addition of GTP-tubulin dimers to the microtubule end, where a stabilizing cap forms. Below the cap, tubulin dimers are in GDP-bound state, owing to GTPase activity of alpha-tubulin. This Oryza sativa subsp. japonica (Rice) protein is Tubulin beta-6 chain (TUBB6).